The sequence spans 102 residues: Large ribosomal subunit protein bL21 (102 aa).

The protein belongs to the bacterial ribosomal protein bL21 family. Part of the 50S ribosomal subunit. Contacts protein L20.

Its function is as follows. This protein binds to 23S rRNA in the presence of protein L20. This chain is Large ribosomal subunit protein bL21, found in Pediococcus pentosaceus (strain ATCC 25745 / CCUG 21536 / LMG 10740 / 183-1w).